Consider the following 370-residue polypeptide: 4-hydroxy-3-methylbut-2-en-1-yl diphosphate synthase (flavodoxin) (370 aa).

[4Fe-4S] cluster is bound by residues C270, C273, C305, and E312.

Belongs to the IspG family. Requires [4Fe-4S] cluster as cofactor.

The enzyme catalyses (2E)-4-hydroxy-3-methylbut-2-enyl diphosphate + oxidized [flavodoxin] + H2O + 2 H(+) = 2-C-methyl-D-erythritol 2,4-cyclic diphosphate + reduced [flavodoxin]. Its pathway is isoprenoid biosynthesis; isopentenyl diphosphate biosynthesis via DXP pathway; isopentenyl diphosphate from 1-deoxy-D-xylulose 5-phosphate: step 5/6. In terms of biological role, converts 2C-methyl-D-erythritol 2,4-cyclodiphosphate (ME-2,4cPP) into 1-hydroxy-2-methyl-2-(E)-butenyl 4-diphosphate. This Hahella chejuensis (strain KCTC 2396) protein is 4-hydroxy-3-methylbut-2-en-1-yl diphosphate synthase (flavodoxin).